Consider the following 113-residue polypeptide: Putative anti-sigma factor antagonist TM1081 homolog (113 aa).

The 110-residue stretch at Met-1–Val-110 folds into the STAS domain. Ser-55 bears the Phosphoserine mark.

This sequence belongs to the anti-sigma-factor antagonist family. Phosphorylated on a serine residue.

In the phosphorylated form it could act as an anti-anti-sigma factor that counteracts an anti-sigma factor and thus releases a sigma factor from inhibition. The sequence is that of Putative anti-sigma factor antagonist TM1081 homolog from Thermotoga neapolitana.